Consider the following 334-residue polypeptide: Zinc finger Ran-binding domain-containing protein 2 (334 aa).

2 consecutive RanBP2-type zinc fingers follow at residues 9-40 (SDGDWICPDKKCGNVNFARRTSCNRCGREKTT) and 65-94 (SANDWQCKTCGNVNWARRSECNMCNTPKYA). The tract at residues 117–334 (REESDGEYDE…SGSRTSSKKK (218 aa)) is disordered. Acidic residues predominate over residues 150–163 (DKESEGEDEEDEDG). Over residues 196–212 (KKKKSNRRSRSKSRSSH) the composition is skewed to basic residues. 2 stretches are compositionally biased toward low complexity: residues 213–224 (SRSSSRSSSHSS) and 258–285 (SRSSSRSYRGSSTPRKRSYSSSRSSSSP). Over residues 302–318 (RKKRRSRSRSPERRRRS) the composition is skewed to basic residues. Over residues 319 to 334 (SSGSSHSGSRTSSKKK) the composition is skewed to low complexity.

It belongs to the ZRANB2 family.

Its subcellular location is the nucleus. May regulate alternative splicing by interfering with constitutive 5'-splice site selection. The polypeptide is Zinc finger Ran-binding domain-containing protein 2 (Gallus gallus (Chicken)).